Reading from the N-terminus, the 205-residue chain is LexA repressor (205 aa).

The H-T-H motif DNA-binding region spans 28–48 (RAEIAASLGFRSPNAAEEHLK). Active-site for autocatalytic cleavage activity residues include S122 and K159.

The protein belongs to the peptidase S24 family. Homodimer.

It carries out the reaction Hydrolysis of Ala-|-Gly bond in repressor LexA.. Functionally, represses a number of genes involved in the response to DNA damage (SOS response), including recA and lexA. Binds to the 16 bp palindromic sequence 5'-CTGTATATATATACAG-3'. In the presence of single-stranded DNA, RecA interacts with LexA causing an autocatalytic cleavage which disrupts the DNA-binding part of LexA, leading to derepression of the SOS regulon and eventually DNA repair. The protein is LexA repressor of Providencia rettgeri.